Here is a 389-residue protein sequence, read N- to C-terminus: POU domain, class 5, transcription factor 3 (389 aa).

Composition is skewed to low complexity over residues 1–18 (MFSP…LLPD) and 145–165 (LANL…GHSS). Disordered stretches follow at residues 1-88 (MFSP…APPA) and 145-177 (LANL…TSEE). A compositionally biased stretch (acidic residues) spans 167–177 (SGDEDAPTSEE). In terms of domain architecture, POU-specific spans 170–244 (EDAPTSEELE…LLQRWLNEAE (75 aa)). A DNA-binding region (homeobox) is located at residues 264–323 (KRKRRTSIETNVKGTLESFFRKCVKPSPQEISQIAEDLNLDKDVVRVWFCNRRQKGKRLL).

The protein belongs to the POU transcription factor family.

It localises to the nucleus. In terms of biological role, required for the maintenance of pluripotency and self-renewal of embryonic stem cells. Transcriptional activator that binds the DNA consensus sequence 5'-ATGCAAAT-3'. The chain is POU domain, class 5, transcription factor 3 (POU5F3) from Gallus gallus (Chicken).